Reading from the N-terminus, the 175-residue chain is Alkyl hydroperoxide reductase AhpD (175 aa).

Cys-131 functions as the Proton donor in the catalytic mechanism. Cysteines 131 and 134 form a disulfide. The active-site Cysteine sulfenic acid (-SOH) intermediate is Cys-134.

This sequence belongs to the AhpD family.

It carries out the reaction N(6)-[(R)-dihydrolipoyl]-L-lysyl-[lipoyl-carrier protein] + a hydroperoxide = N(6)-[(R)-lipoyl]-L-lysyl-[lipoyl-carrier protein] + an alcohol + H2O. Its function is as follows. Antioxidant protein with alkyl hydroperoxidase activity. Required for the reduction of the AhpC active site cysteine residues and for the regeneration of the AhpC enzyme activity. The chain is Alkyl hydroperoxide reductase AhpD from Brucella canis (strain ATCC 23365 / NCTC 10854 / RM-666).